We begin with the raw amino-acid sequence, 100 residues long: NADH-quinone oxidoreductase subunit K (100 aa).

Transmembrane regions (helical) follow at residues 4–24 (LQHG…GLVI), 28–48 (LLFM…AFVV), and 60–80 (VMYI…LALL).

This sequence belongs to the complex I subunit 4L family. In terms of assembly, NDH-1 is composed of 13 different subunits. Subunits NuoA, H, J, K, L, M, N constitute the membrane sector of the complex.

It is found in the cell inner membrane. The catalysed reaction is a quinone + NADH + 5 H(+)(in) = a quinol + NAD(+) + 4 H(+)(out). Functionally, NDH-1 shuttles electrons from NADH, via FMN and iron-sulfur (Fe-S) centers, to quinones in the respiratory chain. The immediate electron acceptor for the enzyme in this species is believed to be ubiquinone. Couples the redox reaction to proton translocation (for every two electrons transferred, four hydrogen ions are translocated across the cytoplasmic membrane), and thus conserves the redox energy in a proton gradient. This chain is NADH-quinone oxidoreductase subunit K, found in Citrobacter koseri (strain ATCC BAA-895 / CDC 4225-83 / SGSC4696).